Consider the following 404-residue polypeptide: Pyrophosphate--fructose 6-phosphate 1-phosphotransferase (404 aa).

Residue glycine 12 coordinates diphosphate. Mg(2+) is bound at residue aspartate 121. Substrate-binding positions include threonine 149–aspartate 151, methionine 194–arginine 196, glutamate 266, and tyrosine 323–arginine 326. Aspartate 151 functions as the Proton acceptor in the catalytic mechanism.

This sequence belongs to the phosphofructokinase type A (PFKA) family. PPi-dependent PFK group II subfamily. Clade 'P' sub-subfamily. As to quaternary structure, homodimer. It depends on Mg(2+) as a cofactor.

The protein localises to the cytoplasm. The enzyme catalyses beta-D-fructose 6-phosphate + diphosphate = beta-D-fructose 1,6-bisphosphate + phosphate + H(+). It functions in the pathway carbohydrate degradation; glycolysis; D-glyceraldehyde 3-phosphate and glycerone phosphate from D-glucose: step 3/4. Non-allosteric. In terms of biological role, catalyzes the phosphorylation of D-fructose 6-phosphate, the first committing step of glycolysis. Uses inorganic phosphate (PPi) as phosphoryl donor instead of ATP like common ATP-dependent phosphofructokinases (ATP-PFKs), which renders the reaction reversible, and can thus function both in glycolysis and gluconeogenesis. Consistently, PPi-PFK can replace the enzymes of both the forward (ATP-PFK) and reverse (fructose-bisphosphatase (FBPase)) reactions. The sequence is that of Pyrophosphate--fructose 6-phosphate 1-phosphotransferase from Propionibacterium freudenreichii subsp. shermanii (strain ATCC 9614 / DSM 4902 / CIP 103027 / NCIMB 8099 / CIRM-BIA1).